We begin with the raw amino-acid sequence, 73 residues long: U-scoloptoxin(15)-Sa1a (73 aa).

Positions 1 to 20 (MKFHIIFCLLAALMMTSAFA) are cleaved as a signal peptide.

It belongs to the scoloptoxin-15 family. Post-translationally, contains 2 disulfide bonds. In terms of tissue distribution, expressed by the venom gland.

The protein resides in the secreted. This is U-scoloptoxin(15)-Sa1a from Scolopendra alternans (Florida Keys giant centipede).